The following is a 91-amino-acid chain: MNKNIIFSFTVLTLFVIFVQVTGVIGNLQQRRQMNQTWCSRPLLTHKQTGKCVIEDCESKCRQKWKGNGTQATCRNQCNCHFRCPWIQGQP.

Positions 1-26 (MNKNIIFSFTVLTLFVIFVQVTGVIG) are cleaved as a signal peptide. Residues asparagine 35 and asparagine 68 are each glycosylated (N-linked (GlcNAc...) asparagine). 4 cysteine pairs are disulfide-bonded: cysteine 39/cysteine 84, cysteine 52/cysteine 74, cysteine 57/cysteine 78, and cysteine 61/cysteine 80.

Belongs to the DEFL family.

It localises to the secreted. The protein is Putative defensin-like protein 145 (LCR2) of Arabidopsis thaliana (Mouse-ear cress).